The primary structure comprises 327 residues: MSSLEPATTAKVALITTKGPIEIELWAKEVPNITRVFIQNCLDKKYIGTTFNKVIKDYLVQTSKIKEPATLKLKDEFHSRLKFNKRGLVGAVHDDKRNSNNVDSLFITLKPTPEFNNNYVLFGKIMGDSIYNVVKINESELKSEETPMYPAEITDIKILVQYFDDLVESKEHIAEPAKKKAKKAKKPRVKLDYTLEDEEDTGFKMKSAHDLLSDSKLSNKLYANKKKGPSENNEKQKTIEKAQDSSMETKKIVPERPDYKGSEEIENETKITSSENMNHETKQDKPNYKAKLDRNPNIDSDYDSDLDLSSSESIDLFAFKQSNFQSS.

One can recognise a PPIase cyclophilin-type domain in the interval 8-158; the sequence is TTAKVALITT…YPAEITDIKI (151 aa). Residues 223–307 are disordered; sequence ANKKKGPSEN…IDSDYDSDLD (85 aa). Basic and acidic residues-rich tracts occupy residues 228-269 and 277-296; these read GPSE…ENET and MNHE…DRNP.

This sequence belongs to the cyclophilin-type PPIase family. CWC27 subfamily. In terms of assembly, associated with the spliceosome.

The protein localises to the cytoplasm. The protein resides in the nucleus. It carries out the reaction [protein]-peptidylproline (omega=180) = [protein]-peptidylproline (omega=0). Functionally, PPIases accelerate the folding of proteins. It catalyzes the cis-trans isomerization of proline imidic peptide bonds in oligopeptides. Involved in pre-mRNA splicing. The polypeptide is Peptidyl-prolyl isomerase CWC27 (CWC27) (Debaryomyces hansenii (strain ATCC 36239 / CBS 767 / BCRC 21394 / JCM 1990 / NBRC 0083 / IGC 2968) (Yeast)).